Here is a 248-residue protein sequence, read N- to C-terminus: Tyrosine recombinase XerD-like (248 aa).

The Core-binding (CB) domain occupies 1 to 72 (MKSYIEPFIA…TANQFLYYLY (72 aa)). The Tyr recombinase domain occupies 85–248 (DTMKVMRTEK…PVTLEKYYKS (164 aa)). Catalysis depends on residues Lys149 and Arg213. Residue Tyr245 is the O-(3'-phospho-DNA)-tyrosine intermediate of the active site.

Belongs to the 'phage' integrase family. XerD-like subfamily.

The protein resides in the cytoplasm. Its function is as follows. Putative tyrosine recombinase. Not involved in the cutting and rejoining of the recombining DNA molecules on dif(SL) site. In Streptococcus pyogenes serotype M18 (strain MGAS8232), this protein is Tyrosine recombinase XerD-like.